We begin with the raw amino-acid sequence, 311 residues long: Putative dihydroorotate dehydrogenase A (fumarate) (311 aa).

Residues Lys-45, 69–73 (NSMGL), and Asn-128 contribute to the substrate site. 45–46 (KT) is an FMN binding site. Asn-128 is an FMN binding site. Catalysis depends on Cys-131, which acts as the Nucleophile. FMN-binding residues include Lys-165 and Val-193. Substrate is bound at residue 194–195 (NS). Residues Gly-220, 248 to 249 (GG), and 270 to 271 (GT) each bind FMN.

This sequence belongs to the dihydroorotate dehydrogenase family. Type 1 subfamily. In terms of assembly, homodimer. FMN is required as a cofactor.

Its subcellular location is the cytoplasm. It catalyses the reaction (S)-dihydroorotate + fumarate = orotate + succinate. It participates in pyrimidine metabolism; UMP biosynthesis via de novo pathway. Functionally, catalyzes the conversion of dihydroorotate to orotate with fumarate as the electron acceptor. The polypeptide is Putative dihydroorotate dehydrogenase A (fumarate) (pyrD) (Streptococcus uberis (strain ATCC BAA-854 / 0140J)).